The chain runs to 371 residues: Cytochrome b (371 aa).

The next 4 helical transmembrane spans lie at 25–45 (FGSM…FLAI), 69–90 (WIMQ…YIHI), 105–125 (WLSG…GYVL), and 170–190 (FFAL…IHII). The heme b site is built by histidine 75 and histidine 89. Heme b contacts are provided by histidine 174 and histidine 188. Position 193 (histidine 193) interacts with a ubiquinone. A run of 4 helical transmembrane segments spans residues 218-238 (YKDT…LSFS), 280-300 (LGGT…PFTH), 312-332 (LAQM…WTAS), and 339-358 (FIII…IMNP).

The protein belongs to the cytochrome b family. As to quaternary structure, the cytochrome bc1 complex contains 3 respiratory subunits (MT-CYB, CYC1 and UQCRFS1), 2 core proteins (UQCRC1 and UQCRC2) and probably 6 low-molecular weight proteins. It depends on heme b as a cofactor.

It is found in the mitochondrion inner membrane. Its function is as follows. Component of the ubiquinol-cytochrome c reductase complex (complex III or cytochrome b-c1 complex) that is part of the mitochondrial respiratory chain. The b-c1 complex mediates electron transfer from ubiquinol to cytochrome c. Contributes to the generation of a proton gradient across the mitochondrial membrane that is then used for ATP synthesis. The chain is Cytochrome b (MT-CYB) from Sinomicrurus kelloggi (Kellogg's coral snake).